The following is a 265-amino-acid chain: Tetrapyrrole-binding protein, chloroplastic (265 aa).

A disordered region spans residues 1 to 24 (MATTNSLHHHHHSSPSYTHHRNNL). A chloroplast-targeting transit peptide spans 1 to 69 (MATTNSLHHH…TAVSAVSTTN (69 aa)). Over residues 7-23 (LHHHHHSSPSYTHHRNN) the composition is skewed to basic residues.

In terms of assembly, interacts with CHLH, the protoporphyrin IX-binding subunit of Mg-chelatase. Monomer or extremely compact dimer.

It is found in the plastid. It localises to the chloroplast membrane. Regulates chlorophyll synthesis and plastid-to-nucleus signal transduction by binding both the product and the substrate of Mg-chelatase, an enzyme that produces magnesium-protoporphyrin IX (Mg-Proto). Also activates Mg-chelatase. Neither binds abscisic acid (ABA) nor is involved in ABA signaling. In Arabidopsis thaliana (Mouse-ear cress), this protein is Tetrapyrrole-binding protein, chloroplastic (GUN4).